The chain runs to 326 residues: uncharacterized protein (326 aa).

The protein to B.subtilis XkdQ.

This is an uncharacterized protein from Bacillus subtilis (strain 168).